The chain runs to 135 residues: Prostate and breast cancer overexpressed gene 1 protein (135 aa).

Expressed in colon, prostate, small intestine, testis and spleen, with lower expression in thymus, ovary, and peripheral blood leukocytes. Up-regulated expression in prostate, breast, and bladder cancer, but not in lung and colon cancer.

It is found in the cytoplasm. Its subcellular location is the nucleus. The protein is Prostate and breast cancer overexpressed gene 1 protein (PBOV1) of Homo sapiens (Human).